The following is a 299-amino-acid chain: Acetylglutamate kinase (299 aa).

Residues 64–65, Arg-86, and Asn-197 contribute to the substrate site; that span reads GG.

The protein belongs to the acetylglutamate kinase family. ArgB subfamily.

Its subcellular location is the cytoplasm. It catalyses the reaction N-acetyl-L-glutamate + ATP = N-acetyl-L-glutamyl 5-phosphate + ADP. It participates in amino-acid biosynthesis; L-arginine biosynthesis; N(2)-acetyl-L-ornithine from L-glutamate: step 2/4. Its function is as follows. Catalyzes the ATP-dependent phosphorylation of N-acetyl-L-glutamate. This chain is Acetylglutamate kinase, found in Persephonella marina (strain DSM 14350 / EX-H1).